A 510-amino-acid chain; its full sequence is MMKKPVALIIMDGFGYNKDVKGNAIAESKTPNLDRIKKEYPNTLINASGLDVGLPDGQMGNSEVGHTNIGAGRIVYQDLTRITKSIKDGDFFTNKVLCEAMDNAKENSLHVMGLLSDGGVHSHIDHLKAIIKMAKDKGVQKVYVHAFTDGRDTDPQSALEYAKEVQASMDEIGVGEFATVSGRYYAMDRDKRWERVELAYNAMVRGIGEKANSIEEAIQNSYDDGKNDEFIMPTVIMKDDKPVGSIKENDSIIFFNFRPDRARQITRALVCEEFDGFKREDIKNFFVCLTEYDITIENVHIAFGPQSLANTLGEYLAKNGKTQLRAAETEKYAHVTFFFNGGVEEPNKGEERLLIPSPKVATYDLKPEMSAYELTDKALDKLGEDKFDFIVLNFANPDMVGHTGSIEAAIKAVETVDTCVGKLIDKIVELGGSAIITADHGNAEYMLDPETGKTVTAHSINPVPFIVVGQEYESAKLLDGGRLSDIAPTILDMMKLEKPEEMTGHSLISK.

Positions 12 and 62 each coordinate Mn(2+). The Phosphoserine intermediate role is filled by Ser62. Substrate-binding positions include His121, 151–152 (RD), Arg183, Arg189, 258–261 (RPDR), and Lys331. Positions 398, 402, 439, 440, and 458 each coordinate Mn(2+).

The protein belongs to the BPG-independent phosphoglycerate mutase family. Monomer. Requires Mn(2+) as cofactor.

The catalysed reaction is (2R)-2-phosphoglycerate = (2R)-3-phosphoglycerate. It functions in the pathway carbohydrate degradation; glycolysis; pyruvate from D-glyceraldehyde 3-phosphate: step 3/5. Functionally, catalyzes the interconversion of 2-phosphoglycerate and 3-phosphoglycerate. This chain is 2,3-bisphosphoglycerate-independent phosphoglycerate mutase, found in Clostridioides difficile (strain 630) (Peptoclostridium difficile).